A 78-amino-acid chain; its full sequence is Acyl carrier protein (78 aa).

The 76-residue stretch at 2-77 (SNIEERVKKI…AAIDYVTSNA (76 aa)) folds into the Carrier domain. Position 37 is an O-(pantetheine 4'-phosphoryl)serine (Ser-37).

It belongs to the acyl carrier protein (ACP) family. 4'-phosphopantetheine is transferred from CoA to a specific serine of apo-ACP by AcpS. This modification is essential for activity because fatty acids are bound in thioester linkage to the sulfhydryl of the prosthetic group.

It localises to the cytoplasm. It functions in the pathway lipid metabolism; fatty acid biosynthesis. In terms of biological role, carrier of the growing fatty acid chain in fatty acid biosynthesis. This is Acyl carrier protein from Vibrio cholerae serotype O1 (strain ATCC 39315 / El Tor Inaba N16961).